Consider the following 447-residue polypeptide: Ribosomal protein uS12 methylthiotransferase RimO (447 aa).

Residues E6 to S122 enclose the MTTase N-terminal domain. The [4Fe-4S] cluster site is built by C15, C51, C85, C160, C164, and C167. The region spanning S146–K376 is the Radical SAM core domain. Residues R379 to S447 form the TRAM domain.

It belongs to the methylthiotransferase family. RimO subfamily. It depends on [4Fe-4S] cluster as a cofactor.

The protein resides in the cytoplasm. The catalysed reaction is L-aspartate(89)-[ribosomal protein uS12]-hydrogen + (sulfur carrier)-SH + AH2 + 2 S-adenosyl-L-methionine = 3-methylsulfanyl-L-aspartate(89)-[ribosomal protein uS12]-hydrogen + (sulfur carrier)-H + 5'-deoxyadenosine + L-methionine + A + S-adenosyl-L-homocysteine + 2 H(+). In terms of biological role, catalyzes the methylthiolation of an aspartic acid residue of ribosomal protein uS12. The chain is Ribosomal protein uS12 methylthiotransferase RimO from Geobacter sulfurreducens (strain ATCC 51573 / DSM 12127 / PCA).